The chain runs to 38 residues: Large ribosomal subunit protein bL36 (38 aa).

The protein belongs to the bacterial ribosomal protein bL36 family.

This Wigglesworthia glossinidia brevipalpis protein is Large ribosomal subunit protein bL36.